A 183-amino-acid chain; its full sequence is COMM domain-containing protein 8 (183 aa).

The 68-residue stretch at 116-183 (QLQDFDWQVK…AANKVVLQLK (68 aa)) folds into the COMM domain.

Belongs to the COMM domain-containing protein 8 family. Component of the commander complex consisting of the CCC subcomplex and the retriever subcomplex. Component of the CCC (COMMD/CCDC22/CCDC93) subcomplex consisting of COMMD1, COMMD2, COMMD3, COMMD4, COMMD5, COMMD6, COMMD7, COMMD8, COMMD9, COMMD10, CCDC22 and CCDC93; within the complex forms a heterodimer with COMMD4. Interacts with RELA, RELB, NFKB1/p105. Interacts with CCDC22, CCDC93, SCNN1B, CUL1, CUL2, CUL3, CUL4A, CUL4B, CUL5. Widely expressed with highest expression in thyroid.

Its subcellular location is the cytoplasm. The protein localises to the nucleus. Scaffold protein in the commander complex that is essential for endosomal recycling of transmembrane cargos; the commander complex is composed of the CCC subcomplex and the retriever subcomplex. May modulate activity of cullin-RING E3 ubiquitin ligase (CRL) complexes. May down-regulate activation of NF-kappa-B. The polypeptide is COMM domain-containing protein 8 (COMMD8) (Homo sapiens (Human)).